We begin with the raw amino-acid sequence, 685 residues long: Translation factor GUF1 homolog, mitochondrial (685 aa).

A mitochondrion-targeting transit peptide spans 1–54; it reads MFSRLLNRGNGGVNKNITSGLLLRRTTTTTTRLSYINNSPTLSIRSFCSKSTTI. The tr-type G domain occupies 68–267; sequence DRIRNFSIIA…AVIDRIPPPQ (200 aa). GTP is bound by residues 77 to 84, 160 to 164, and 214 to 217; these read AHIDHGKT, DTPGH, and NKID.

Belongs to the TRAFAC class translation factor GTPase superfamily. Classic translation factor GTPase family. LepA subfamily.

The protein localises to the mitochondrion inner membrane. The catalysed reaction is GTP + H2O = GDP + phosphate + H(+). Its function is as follows. Promotes mitochondrial protein synthesis. May act as a fidelity factor of the translation reaction, by catalyzing a one-codon backward translocation of tRNAs on improperly translocated ribosomes. Binds to mitochondrial ribosomes in a GTP-dependent manner. The sequence is that of Translation factor GUF1 homolog, mitochondrial (guf1) from Dictyostelium discoideum (Social amoeba).